The chain runs to 461 residues: B3 domain-containing protein REM9 (461 aa).

The TF-B3 1 DNA-binding region spans 11–103 (NQHFFQPLLP…VFHVTALGPS (93 aa)). The segment at 110–146 (PQSSRHEEGEESGENEISEKEGEENVQKESDKSSSDL) is disordered. The segment covering 126–143 (ISEKEGEENVQKESDKSS) has biased composition (basic and acidic residues). 2 consecutive DNA-binding regions (TF-B3) follow at residues 148–244 (CFSQ…CSRT) and 230–332 (LQKA…EQPS). The tract at residues 333-415 (FKAEDGRHKR…SGIEGNLQHT (83 aa)) is disordered. Positions 384 to 394 (PKVEIREKIAE) are enriched in basic and acidic residues. Positions 400–415 (RASNKSSGIEGNLQHT) are enriched in polar residues.

The protein resides in the nucleus. This chain is B3 domain-containing protein REM9 (REM9), found in Arabidopsis thaliana (Mouse-ear cress).